Consider the following 317-residue polypeptide: Pantothenate kinase (317 aa).

ATP is bound at residue 95 to 102; sequence GSVAVGKS.

This sequence belongs to the prokaryotic pantothenate kinase family.

It localises to the cytoplasm. The enzyme catalyses (R)-pantothenate + ATP = (R)-4'-phosphopantothenate + ADP + H(+). It participates in cofactor biosynthesis; coenzyme A biosynthesis; CoA from (R)-pantothenate: step 1/5. This is Pantothenate kinase from Rhodopseudomonas palustris (strain BisB18).